The primary structure comprises 251 residues: Putative deaminase AgaI (251 aa).

Catalysis depends on aspartate 86, which acts as the Proton acceptor; for enolization step. Asparagine 154 (for ring-opening step) is an active-site residue. Residue histidine 156 is the Proton acceptor; for ring-opening step of the active site. The active-site For ring-opening step is the glutamate 161.

The protein belongs to the glucosamine/galactosamine-6-phosphate isomerase family.

The protein is Putative deaminase AgaI (agaI) of Escherichia coli (strain K12).